The following is a 664-amino-acid chain: Glycine--tRNA ligase beta subunit (664 aa).

The protein belongs to the class-II aminoacyl-tRNA synthetase family. In terms of assembly, tetramer of two alpha and two beta subunits.

Its subcellular location is the cytoplasm. It catalyses the reaction tRNA(Gly) + glycine + ATP = glycyl-tRNA(Gly) + AMP + diphosphate. This Rickettsia conorii (strain ATCC VR-613 / Malish 7) protein is Glycine--tRNA ligase beta subunit.